We begin with the raw amino-acid sequence, 743 residues long: Dystrobrevin alpha (743 aa).

An interaction with MAGEE1 region spans residues 1–288 (MIEDSGKRGN…SHSNQHQMKE (288 aa)). Residues 238–294 (FHPVECSYCHSESMMGFRYRCQQCHNYQLCQDCFWRGHAGGSHSNQHQMKEYTSWKS) form a ZZ-type zinc finger. Zn(2+) contacts are provided by Cys243, Cys246, Cys258, Cys261, Cys267, Cys270, His280, and His284. The interval 400-450 (DRLADEHVLIGLYVNMLRNNPSCMLESSNRLDEEHRLIARYAARLAAESSS) is syntrophin-binding region. Positions 461–556 (DISFTIDANK…EGLMKLLKTQ (96 aa)) form a coiled coil. The segment at 556-575 (QGAGSPRSSPSHTISRPIPM) is disordered. Residues 557 to 569 (GAGSPRSSPSHTI) are compositionally biased toward polar residues. The residue at position 662 (Ser662) is a Phosphoserine.

The protein belongs to the dystrophin family. Dystrobrevin subfamily. As to quaternary structure, interacts with dystrophin, utrophin and the syntrophins SNTA1, SNTB1, SNTB2, SNTG1 and SNTG2. Interacts with MAGEE1. Binds dystrobrevin binding protein 1. Interacts with CTNNAL1. The interaction is required for correct localization of both CTNNAL1 and DTNA. Does not interact with dystrophin. Post-translationally, phosphorylation of DTN-1 on tyrosine kinase substrate domain present in the C-terminus. As to expression, highly expressed in brain, skeletal and cardiac muscles, and expressed at lower levels in lung, liver and pancreas. Isoform 2 is not expressed in cardiac muscle. Isoform 7 and isoform 8 are only expressed in muscle.

The protein localises to the cytoplasm. Its subcellular location is the synapse. The protein resides in the cell membrane. In terms of biological role, may be involved in the formation and stability of synapses as well as being involved in the clustering of nicotinic acetylcholine receptors. This chain is Dystrobrevin alpha, found in Homo sapiens (Human).